Reading from the N-terminus, the 340-residue chain is Short-chain dehydrogenase/reductase ffsI (340 aa).

Residues Leu46, Arg71, Asp96, Asn123, Tyr211, and Lys215 each coordinate NADP(+). The active-site Proton acceptor is the Tyr211. The Lowers pKa of active site Tyr role is filled by Lys215.

Belongs to the short-chain dehydrogenases/reductases (SDR) family.

It participates in mycotoxin biosynthesis. Functionally, short-chain dehydrogenase/reductase; part of the gene cluster that mediates the biosynthesis of the cytotoxic leucine-containing cytochalasans, including aspochalasin C, aspochalasin E, TMC-169, flavichalasine F, aspergillin PZ, aspochalasin M and flavichalasine G. The first step in the pathway is catalyzed by the hybrid PKS-NRPS ffsA that utilizes 8 units of malonyl-CoA to iteratively assemble the octaketide chain before addition of L-leucine by the C-terminal NRPS modules. Because ffsA lacks a designated enoylreductase (ER) domain, the required activity is provided the enoyl reductase fssC. The methyltransferase (MT) domain of ffsA catalyzes the alpha-methylation at C10 and C14 using S-adenosyl-L-methionine as the methyl-donating cosubstrate. Reduction by the hydrolyase ffsE, followed by dehydration and intra-molecular Diels-Alder cyclization by the Diels-Alderase ffsF then yield the required isoindolone-fused macrocycle. A number of oxidative steps catalyzed by the tailoring cytochrome P450 monooxygenase ffsD, the FAD-linked oxidoreductase ffsJ and the short-chain dehydrogenase/reductase ffsI, are further required to afford the final products. The chain is Short-chain dehydrogenase/reductase ffsI from Aspergillus flavipes.